The chain runs to 215 residues: Transmembrane protein 267 (215 aa).

The next 3 helical transmembrane spans lie at 77-97 (FCEV…HFFL), 114-134 (PLHC…LMQL), and 178-198 (YWLY…IMCL).

Its subcellular location is the membrane. This is Transmembrane protein 267 (tmem267) from Xenopus laevis (African clawed frog).